The chain runs to 71 residues: DNA-directed RNA polymerase subunit epsilon (71 aa).

It belongs to the RNA polymerase subunit epsilon family. Monomer. RNAP is composed of a core of 2 alpha, a beta and a beta' subunit. The core is associated with a delta subunit, and at least one of epsilon or omega. When a sigma factor is associated with the core the holoenzyme is formed, which can initiate transcription.

The catalysed reaction is RNA(n) + a ribonucleoside 5'-triphosphate = RNA(n+1) + diphosphate. Its function is as follows. A non-essential component of RNA polymerase (RNAP). Has a similar structure to bacteriophage T7 protein Gp2 (AC P03704), which is known to bind to RNAP in the DNA binding-cleft. Unlike Gp2 however, this protein does not inhibit transcription initiation. The chain is DNA-directed RNA polymerase subunit epsilon from Geobacillus stearothermophilus (strain DSM 13240 / CIP 106956 / 10).